The primary structure comprises 436 residues: GTPase Der (436 aa).

EngA-type G domains follow at residues 4-167 and 176-351; these read PVVA…PKEE and VKFS…DNHS. Residues 10–17, 57–61, 119–122, 182–189, 229–233, and 294–297 each bind GTP; these read GRPNVGKS, DTGGI, NKVD, DTAGM, and NKWD. A KH-like domain is found at 352 to 436; the sequence is LRVQSSMLND…PIRVIARKRK (85 aa).

It belongs to the TRAFAC class TrmE-Era-EngA-EngB-Septin-like GTPase superfamily. EngA (Der) GTPase family. Associates with the 50S ribosomal subunit.

In terms of biological role, GTPase that plays an essential role in the late steps of ribosome biogenesis. This Listeria monocytogenes serotype 4b (strain F2365) protein is GTPase Der.